Reading from the N-terminus, the 157-residue chain is Transcription elongation factor GreA (157 aa).

This sequence belongs to the GreA/GreB family.

In terms of biological role, necessary for efficient RNA polymerase transcription elongation past template-encoded arresting sites. The arresting sites in DNA have the property of trapping a certain fraction of elongating RNA polymerases that pass through, resulting in locked ternary complexes. Cleavage of the nascent transcript by cleavage factors such as GreA or GreB allows the resumption of elongation from the new 3'terminus. GreA releases sequences of 2 to 3 nucleotides. This is Transcription elongation factor GreA from Bartonella tribocorum (strain CIP 105476 / IBS 506).